The following is a 252-amino-acid chain: Cysteine-rich repeat secretory protein 38 (252 aa).

An N-terminal signal peptide occupies residues 1–27; that stretch reads MSSLKRIVWFPILAIAIQILSIHTVLS. Gnk2-homologous domains follow at residues 34-136 and 142-248; these read FLFH…STNF and FENR…IYPF.

This sequence belongs to the cysteine-rich repeat secretory protein family.

The protein localises to the secreted. This Arabidopsis thaliana (Mouse-ear cress) protein is Cysteine-rich repeat secretory protein 38 (CRRSP38).